Here is a 195-residue protein sequence, read N- to C-terminus: MIRKVKPQIRVLGFDDGTFSFSSKLKHEKTILIGVVMKGSLEVVGVLSRWITVDGRDVTDAMINSVNSSRFKDLRVILLKGITYAGFNVVDLERLHNETGLPVVVVVRKKPDILAMEDALRKHFRDAEERIALLRKTPPLVELVPDKLYFQTVGLDEKTAAEVIKVTTRTGFIPEPLRLAHMIASAVMTGESKRE.

Belongs to the UPF0215 family.

This Thermococcus kodakarensis (strain ATCC BAA-918 / JCM 12380 / KOD1) (Pyrococcus kodakaraensis (strain KOD1)) protein is UPF0215 protein TK2033.